A 104-amino-acid polypeptide reads, in one-letter code: Nucleoid-associated protein Bsph_0039 (104 aa).

Residues 1-12 (MRGMGNMQGMMK) are compositionally biased toward low complexity. The segment at 1–22 (MRGMGNMQGMMKKMQKMQKEMM) is disordered.

It belongs to the YbaB/EbfC family. In terms of assembly, homodimer.

The protein resides in the cytoplasm. Its subcellular location is the nucleoid. Its function is as follows. Binds to DNA and alters its conformation. May be involved in regulation of gene expression, nucleoid organization and DNA protection. This Lysinibacillus sphaericus (strain C3-41) protein is Nucleoid-associated protein Bsph_0039.